The chain runs to 292 residues: Leucine-rich repeat-containing protein 10B (292 aa).

Residues 1-20 form a disordered region; it reads MGIAESTPDELPSDAEEQLR. A compositionally biased stretch (acidic residues) spans 7–16; it reads TPDELPSDAE. LRR repeat units lie at residues 22 to 43, 45 to 66, 68 to 90, 91 to 112, 114 to 136, 137 to 158, 160 to 181, 183 to 204, and 205 to 226; these read GDQQ…VCAL, RLQK…IEEL, ELRI…CRLP, RLTR…FAQL, SLRC…LRLV, ALQS…LPRM, GLRG…LLRM, RLHI…HPLR, and ALRV…ADTV. A disordered region spans residues 236 to 261; that stretch reads RMAERDEPTPRPPPRRPARAFEDEEE.

This Homo sapiens (Human) protein is Leucine-rich repeat-containing protein 10B (LRRC10B).